Reading from the N-terminus, the 149-residue chain is Nucleoside diphosphate kinase (149 aa).

Residues Lys9, Phe57, Arg85, Thr91, Arg102, and Asn112 each contribute to the ATP site. The active-site Pros-phosphohistidine intermediate is the His115.

The protein belongs to the NDK family. In terms of assembly, homotetramer. Mg(2+) is required as a cofactor.

The protein resides in the cytoplasm. It catalyses the reaction dZDP + ATP = dZTP + ADP. The enzyme catalyses a 2'-deoxyribonucleoside 5'-diphosphate + ATP = a 2'-deoxyribonucleoside 5'-triphosphate + ADP. The catalysed reaction is a ribonucleoside 5'-diphosphate + ATP = a ribonucleoside 5'-triphosphate + ADP. It functions in the pathway purine metabolism. In terms of biological role, major role in the synthesis of nucleoside triphosphates other than ATP. The ATP gamma phosphate is transferred to the NDP beta phosphate via a ping-pong mechanism, using a phosphorylated active-site intermediate. Its function is as follows. (Microbial infection) Catalyzes the phosphorylation of dZDP to dZTP, when the bacterium is infected by a phage that produces the substrate for the synthesis of dZTP (2- amino-2'-deoxyadenosine 5'-triphosphate), which is then used by the phage as a DNA polymerase substrate. This is Nucleoside diphosphate kinase from Picosynechococcus sp. (strain ATCC 27264 / PCC 7002 / PR-6) (Agmenellum quadruplicatum).